We begin with the raw amino-acid sequence, 344 residues long: Tetraacyldisaccharide 4'-kinase (344 aa).

65 to 72 (HAGGTGKT) is an ATP binding site.

It belongs to the LpxK family.

The catalysed reaction is a lipid A disaccharide + ATP = a lipid IVA + ADP + H(+). The protein operates within glycolipid biosynthesis; lipid IV(A) biosynthesis; lipid IV(A) from (3R)-3-hydroxytetradecanoyl-[acyl-carrier-protein] and UDP-N-acetyl-alpha-D-glucosamine: step 6/6. Transfers the gamma-phosphate of ATP to the 4'-position of a tetraacyldisaccharide 1-phosphate intermediate (termed DS-1-P) to form tetraacyldisaccharide 1,4'-bis-phosphate (lipid IVA). The polypeptide is Tetraacyldisaccharide 4'-kinase (Neisseria meningitidis serogroup A / serotype 4A (strain DSM 15465 / Z2491)).